Reading from the N-terminus, the 314-residue chain is 2-dehydro-3-deoxygluconokinase (314 aa).

Residues 28–32, Y88, 102–104, and R170 contribute to the substrate site; these read GDTLN and YWR. Residues 168-170, 228-233, and 260-263 each bind ATP; these read NYR, KCGKNG, and SAGD. A substrate-binding site is contributed by D263. The Proton acceptor role is filled by D263.

This sequence belongs to the carbohydrate kinase PfkB family.

It carries out the reaction 2-dehydro-3-deoxy-D-gluconate + ATP = 2-dehydro-3-deoxy-6-phospho-D-gluconate + ADP + H(+). It participates in carbohydrate acid metabolism; 2-dehydro-3-deoxy-D-gluconate degradation; D-glyceraldehyde 3-phosphate and pyruvate from 2-dehydro-3-deoxy-D-gluconate: step 1/2. Catalyzes the phosphorylation of 2-keto-3-deoxygluconate (KDG) to produce 2-keto-3-deoxy-6-phosphogluconate (KDPG). The protein is 2-dehydro-3-deoxygluconokinase (kdgK) of Haemophilus influenzae (strain ATCC 51907 / DSM 11121 / KW20 / Rd).